A 68-amino-acid polypeptide reads, in one-letter code: Small, acid-soluble spore protein I (68 aa).

It belongs to the SspI family.

The protein resides in the spore core. The protein is Small, acid-soluble spore protein I of Halalkalibacterium halodurans (strain ATCC BAA-125 / DSM 18197 / FERM 7344 / JCM 9153 / C-125) (Bacillus halodurans).